The sequence spans 413 residues: Serine hydroxymethyltransferase (413 aa).

(6S)-5,6,7,8-tetrahydrofolate is bound by residues L117 and 121-123 (GHL). K226 is subject to N6-(pyridoxal phosphate)lysine. 349-351 (SPF) contributes to the (6S)-5,6,7,8-tetrahydrofolate binding site.

This sequence belongs to the SHMT family. Homodimer. The cofactor is pyridoxal 5'-phosphate.

The protein resides in the cytoplasm. It catalyses the reaction (6R)-5,10-methylene-5,6,7,8-tetrahydrofolate + glycine + H2O = (6S)-5,6,7,8-tetrahydrofolate + L-serine. It participates in one-carbon metabolism; tetrahydrofolate interconversion. It functions in the pathway amino-acid biosynthesis; glycine biosynthesis; glycine from L-serine: step 1/1. Catalyzes the reversible interconversion of serine and glycine with tetrahydrofolate (THF) serving as the one-carbon carrier. This reaction serves as the major source of one-carbon groups required for the biosynthesis of purines, thymidylate, methionine, and other important biomolecules. Also exhibits THF-independent aldolase activity toward beta-hydroxyamino acids, producing glycine and aldehydes, via a retro-aldol mechanism. The sequence is that of Serine hydroxymethyltransferase from Listeria welshimeri serovar 6b (strain ATCC 35897 / DSM 20650 / CCUG 15529 / CIP 8149 / NCTC 11857 / SLCC 5334 / V8).